A 740-amino-acid chain; its full sequence is Catalase-peroxidase (740 aa).

The disordered stretch occupies residues 1–32 (MPEDRPIEDSPPIGEAQTDAPAGGCPAGFGRI). Residues 113 to 237 (WHAAGTYRVS…LAAVQMGLIY (125 aa)) constitute a cross-link (tryptophyl-tyrosyl-methioninium (Trp-Tyr) (with M-263)). His-114 acts as the Proton acceptor in catalysis. Residues 237–263 (YVNPEGPNGNPDPQASAIDIRETFGRM) constitute a cross-link (tryptophyl-tyrosyl-methioninium (Tyr-Met) (with W-113)). Residue His-278 coordinates heme b.

This sequence belongs to the peroxidase family. Peroxidase/catalase subfamily. In terms of assembly, homodimer or homotetramer. Heme b is required as a cofactor. Post-translationally, formation of the three residue Trp-Tyr-Met cross-link is important for the catalase, but not the peroxidase activity of the enzyme.

The enzyme catalyses H2O2 + AH2 = A + 2 H2O. The catalysed reaction is 2 H2O2 = O2 + 2 H2O. Bifunctional enzyme with both catalase and broad-spectrum peroxidase activity. May play a role in the intracellular survival of mycobacteria. This is Catalase-peroxidase from Mycolicibacterium smegmatis (Mycobacterium smegmatis).